Reading from the N-terminus, the 129-residue chain is Small ribosomal subunit protein uS8mz (129 aa).

The protein belongs to the universal ribosomal protein uS8 family. As to quaternary structure, component of the mitochondrial ribosome small subunit.

It is found in the mitochondrion. In Arabidopsis thaliana (Mouse-ear cress), this protein is Small ribosomal subunit protein uS8mz (RPS15AB).